The chain runs to 240 residues: Dihydromonapterin reductase (240 aa).

The Proton acceptor role is filled by Tyr-152.

This sequence belongs to the short-chain dehydrogenases/reductases (SDR) family. FolM subfamily.

The catalysed reaction is (6S)-5,6,7,8-tetrahydrofolate + NADP(+) = 7,8-dihydrofolate + NADPH + H(+). The enzyme catalyses 7,8-dihydromonapterin + NADPH + H(+) = 5,6,7,8-tetrahydromonapterin + NADP(+). Catalyzes the reduction of dihydromonapterin to tetrahydromonapterin. Also has lower activity with dihydrofolate. This is Dihydromonapterin reductase (folM) from Escherichia coli O1:K1 / APEC.